Reading from the N-terminus, the 48-residue chain is Small, acid-soluble spore protein P (48 aa).

Positions 1 to 12 are enriched in basic and acidic residues; the sequence is MTNKNDGKDMRK. Residues 1 to 48 are disordered; sequence MTNKNDGKDMRKNAPKGDNPGQPEPLDGSKKVKNRNHTRQKHNTSHDM. The span at 31–48 shows a compositional bias: basic residues; that stretch reads KVKNRNHTRQKHNTSHDM.

Belongs to the SspP family.

Its subcellular location is the spore core. The protein is Small, acid-soluble spore protein P of Geobacillus kaustophilus (strain HTA426).